A 157-amino-acid chain; its full sequence is Glycine-rich RNA-binding, abscisic acid-inducible protein (157 aa).

The region spanning 8–86 (YRCFVGGLAW…RNITVNQAQS (79 aa)) is the RRM domain. A disordered region spans residues 82–157 (NQAQSRGGGG…YGGGGGGWRD (76 aa)). Residues 87–157 (RGGGGGGGGY…YGGGGGGWRD (71 aa)) show a composition bias toward gly residues.

In terms of biological role, possibly has a role in RNA transcription or processing during stress. In Zea mays (Maize), this protein is Glycine-rich RNA-binding, abscisic acid-inducible protein (RAB15).